The following is a 474-amino-acid chain: ATP synthase subunit beta 2 (474 aa).

151-158 is an ATP binding site; sequence GGAGVGKT.

It belongs to the ATPase alpha/beta chains family. F-type ATPases have 2 components, CF(1) - the catalytic core - and CF(0) - the membrane proton channel. CF(1) has five subunits: alpha(3), beta(3), gamma(1), delta(1), epsilon(1). CF(0) has four main subunits: a(1), b(1), b'(1) and c(9-12).

The protein resides in the cell inner membrane. The enzyme catalyses ATP + H2O + 4 H(+)(in) = ADP + phosphate + 5 H(+)(out). In terms of biological role, produces ATP from ADP in the presence of a proton gradient across the membrane. The catalytic sites are hosted primarily by the beta subunits. This Dinoroseobacter shibae (strain DSM 16493 / NCIMB 14021 / DFL 12) protein is ATP synthase subunit beta 2.